Here is a 465-residue protein sequence, read N- to C-terminus: Triplex capsid protein 1 (465 aa).

This sequence belongs to the herpesviridae TRX1 protein family. Interacts with TRX2, MCP and capsid vertex component 2/CVC2.

The protein resides in the virion. It is found in the host nucleus. In terms of biological role, structural component of the T=16 icosahedral capsid. The capsid is composed of pentamers and hexamers of major capsid protein/MCP, which are linked together by heterotrimers called triplexes. These triplexes are formed by a single molecule of triplex protein 1/TRX1 and two copies of triplex protein 2/TRX2. Additionally, TRX1 is required for efficient transport of TRX2 to the nucleus, which is the site of capsid assembly. This chain is Triplex capsid protein 1, found in Homo sapiens (Human).